Consider the following 61-residue polypeptide: Short neurotoxin 1 (61 aa).

Over residues 1 to 16 (MECHNQQSSQPPTTKT) the composition is skewed to polar residues. The tract at residues 1 to 20 (MECHNQQSSQPPTTKTCPGE) is disordered. 4 disulfides stabilise this stretch: Cys-3–Cys-23, Cys-17–Cys-40, Cys-42–Cys-53, and Cys-54–Cys-59.

It belongs to the three-finger toxin family. Short-chain subfamily. Type I alpha-neurotoxin sub-subfamily. As to expression, expressed by the venom gland.

It is found in the secreted. In terms of biological role, binds to muscle nicotinic acetylcholine receptor (nAChR) and inhibit acetylcholine from binding to the receptor, thereby impairing neuromuscular transmission. The protein is Short neurotoxin 1 of Naja melanoleuca (Forest cobra).